A 376-amino-acid chain; its full sequence is Carbohydrate sulfotransferase 14 (376 aa).

Topologically, residues 1-39 (MFPRPLTPLAAPNGAEPLGRALRRAPLGRARAGLGGPPL) are cytoplasmic. Residues 40–60 (LLPSMLMFAVIVASSGLLLMI) traverse the membrane as a helical; Signal-anchor for type II membrane protein segment. Residues 61–376 (ERGILAEMKP…PNVTKEACQQ (316 aa)) are Lumenal-facing. An N-linked (GlcNAc...) asparagine glycan is attached at Asn110. 3'-phosphoadenylyl sulfate is bound by residues 155–161 (PKVACSN) and 213–221 (REPLERLLS). Asn368 carries an N-linked (GlcNAc...) asparagine glycan.

Belongs to the sulfotransferase 2 family. In terms of tissue distribution, widely expressed. Expressed at high level in pituitary gland, placenta, uterus and thyroid.

The protein localises to the golgi apparatus membrane. It carries out the reaction dermatan + n 3'-phosphoadenylyl sulfate = dermatan 4'-sulfate + n adenosine 3',5'-bisphosphate + n H(+). Catalyzes the transfer of sulfate to position 4 of the N-acetylgalactosamine (GalNAc) residue of dermatan sulfate. Plays a pivotal role in the formation of 4-0-sulfated IdoA blocks in dermatan sulfate. Transfers sulfate to the C-4 hydroxyl of beta1,4-linked GalNAc that is substituted with an alpha-linked iduronic acid (IdoUA) at the C-3 hydroxyl. Transfers sulfate more efficiently to GalNAc residues in -IdoUA-GalNAc-IdoUA- than in -GlcUA-GalNAc-GlcUA-sequences. Has preference for partially desulfated dermatan sulfate. Addition of sulfate to GalNAc may occur immediately after epimerization of GlcUA to IdoUA. Appears to have an important role in the formation of the cerebellar neural network during postnatal brain development. This Homo sapiens (Human) protein is Carbohydrate sulfotransferase 14 (CHST14).